The sequence spans 77 residues: Small ribosomal subunit protein uS17 (77 aa).

This sequence belongs to the universal ribosomal protein uS17 family. Part of the 30S ribosomal subunit.

Its function is as follows. One of the primary rRNA binding proteins, it binds specifically to the 5'-end of 16S ribosomal RNA. The sequence is that of Small ribosomal subunit protein uS17 from Rickettsia prowazekii (strain Madrid E).